Consider the following 149-residue polypeptide: Potassium binding protein Kbp (149 aa).

A BON domain is found at 23 to 91; it reads DKDDQAKKVQ…SVDDQVKTAT (69 aa). One can recognise a LysM domain in the interval 97–146; it reads QFYTVKSGDTLSAISKQVYGNANLYNKIFEANKPMLKSPDKIYPGQVLRI.

It is found in the cytoplasm. Its function is as follows. Highly specific potassium binding protein that is required for normal growth in the presence of high levels of external K(+). May act as a sensor of cytoplasmic K(+) concentration. The chain is Potassium binding protein Kbp from Escherichia coli O6:H1 (strain CFT073 / ATCC 700928 / UPEC).